Consider the following 764-residue polypeptide: Phenylalanine--tRNA ligase beta subunit (764 aa).

The tRNA-binding domain occupies 38–148 (CIAPKNVVVG…GELVLGKELN (111 aa)). Residues 375 to 455 (LKDRTLTFQL…RFVGIDNLVS (81 aa)) form the B5 domain. Mg(2+) contacts are provided by aspartate 433, aspartate 439, glutamate 442, and glutamate 443. One can recognise an FDX-ACB domain in the interval 673–763 (SIYPSSVRDL…LEKEFNARLK (91 aa)).

This sequence belongs to the phenylalanyl-tRNA synthetase beta subunit family. Type 1 subfamily. As to quaternary structure, tetramer of two alpha and two beta subunits. It depends on Mg(2+) as a cofactor.

It localises to the cytoplasm. It catalyses the reaction tRNA(Phe) + L-phenylalanine + ATP = L-phenylalanyl-tRNA(Phe) + AMP + diphosphate + H(+). In Helicobacter pylori (strain ATCC 700392 / 26695) (Campylobacter pylori), this protein is Phenylalanine--tRNA ligase beta subunit (pheT).